Consider the following 239-residue polypeptide: Large ribosomal subunit protein uL30 (239 aa).

The segment at 1–22 (MEGVMSEAPQSSIRKKEYEARM) is disordered.

It belongs to the universal ribosomal protein uL30 family.

The polypeptide is Large ribosomal subunit protein uL30 (RPL7) (Encephalitozoon cuniculi (strain GB-M1) (Microsporidian parasite)).